Here is a 440-residue protein sequence, read N- to C-terminus: Light-independent protochlorophyllide reductase subunit N (440 aa).

The segment at 1 to 24 (MTCRPALSDSHPPEPGTPSSPSFG) is disordered. [4Fe-4S] cluster contacts are provided by Cys42, Cys67, and Cys128.

The protein belongs to the BchN/ChlN family. In terms of assembly, protochlorophyllide reductase is composed of three subunits; BchL, BchN and BchB. Forms a heterotetramer of two BchB and two BchN subunits. [4Fe-4S] cluster serves as cofactor.

It carries out the reaction chlorophyllide a + oxidized 2[4Fe-4S]-[ferredoxin] + 2 ADP + 2 phosphate = protochlorophyllide a + reduced 2[4Fe-4S]-[ferredoxin] + 2 ATP + 2 H2O. It functions in the pathway porphyrin-containing compound metabolism; bacteriochlorophyll biosynthesis (light-independent). Functionally, component of the dark-operative protochlorophyllide reductase (DPOR) that uses Mg-ATP and reduced ferredoxin to reduce ring D of protochlorophyllide (Pchlide) to form chlorophyllide a (Chlide). This reaction is light-independent. The NB-protein (BchN-BchB) is the catalytic component of the complex. The sequence is that of Light-independent protochlorophyllide reductase subunit N from Rhodospirillum rubrum (strain ATCC 11170 / ATH 1.1.1 / DSM 467 / LMG 4362 / NCIMB 8255 / S1).